A 232-amino-acid chain; its full sequence is Large ribosomal subunit protein uL1 (232 aa).

Belongs to the universal ribosomal protein uL1 family. As to quaternary structure, part of the 50S ribosomal subunit.

Binds directly to 23S rRNA. The L1 stalk is quite mobile in the ribosome, and is involved in E site tRNA release. Its function is as follows. Protein L1 is also a translational repressor protein, it controls the translation of the L11 operon by binding to its mRNA. The polypeptide is Large ribosomal subunit protein uL1 (Xanthomonas oryzae pv. oryzae (strain MAFF 311018)).